The sequence spans 113 residues: Sperm-associated antigen 11B (113 aa).

A signal peptide spans 1-26 (MIPRLLPFFASLLFAALLFPGLSNAS). 3 cysteine pairs are disulfide-bonded: Cys80–Cys108, Cys87–Cys101, and Cys91–Cys109.

The protein belongs to the beta-defensin family.

It localises to the secreted. Has antimicrobial activity against E.coli. Plays a role in the defense response in the male reproductive tract, contributing to sperm maturation, storage and protection. The sequence is that of Sperm-associated antigen 11B from Mus musculus (Mouse).